The following is a 531-amino-acid chain: Muscarinic acetylcholine receptor M5 (531 aa).

Topologically, residues 1–28 are extracellular; it reads MEGESYNESTVNGTPVNHQALERHGLWE. Asparagine 7 carries N-linked (GlcNAc...) asparagine glycosylation. A helical membrane pass occupies residues 29–52; that stretch reads VITIAVVTAVVSLMTIVGNVLVMI. The Cytoplasmic segment spans residues 53–65; sequence SFKVNSQLKTVNN. Residues 66 to 86 form a helical membrane-spanning segment; sequence YYLLSLACADLIIGIFSMNLY. Residues 87 to 103 are Extracellular-facing; it reads TTYILMGRWVLGSLACD. Cysteine 102 and cysteine 182 are joined by a disulfide. A helical transmembrane segment spans residues 104–125; that stretch reads LWLALDYVASNASVMNLLVISF. The Cytoplasmic segment spans residues 126–145; the sequence is DRYFSITRPLTYRAKRTPKR. The helical transmembrane segment at 146 to 168 threads the bilayer; it reads AGIMIGLAWLVSFILWAPAILCW. Residues 169–190 are Extracellular-facing; it reads QYLVGKRTVPPDECQIQFLSEP. Residues 191–213 traverse the membrane as a helical segment; it reads TITFGTAIAAFYIPVSVMTILYC. The Cytoplasmic segment spans residues 214 to 442; that stretch reads RIYRETEKRT…LVKERKAAQT (229 aa). 2 disordered regions span residues 259-295 and 327-346; these read SLAQRERNQASWSSSRRSTSTTGKTTQATDLSADWEK and EAKESPGKESNTQETKETVV. Residues 267–287 show a composition bias toward low complexity; sequence QASWSSSRRSTSTTGKTTQAT. Residues 334-346 show a composition bias toward polar residues; sequence KESNTQETKETVV. The helical transmembrane segment at 443-463 threads the bilayer; that stretch reads LSAILLAFIITWTPYNIMVLV. Residues 464–477 are Extracellular-facing; it reads STFCDKCVPVTLWH. The helical transmembrane segment at 478–497 threads the bilayer; sequence LGYWLCYVNSTINPICYALC. The Cytoplasmic portion of the chain corresponds to 498 to 531; it reads NRTFRKTFKLLLLCRWKKKKVEEKLYWQGNSKLP. Phosphothreonine occurs at positions 500 and 504.

It belongs to the G-protein coupled receptor 1 family. Muscarinic acetylcholine receptor subfamily. CHRM5 sub-subfamily.

The protein localises to the cell membrane. The protein resides in the postsynaptic cell membrane. Its function is as follows. The muscarinic acetylcholine receptor mediates various cellular responses, including inhibition of adenylate cyclase, breakdown of phosphoinositides and modulation of potassium channels through the action of G proteins. Primary transducing effect is Pi turnover. The sequence is that of Muscarinic acetylcholine receptor M5 (Chrm5) from Rattus norvegicus (Rat).